The chain runs to 96 residues: MARPKIERRICGRAAHHCFKPNGVPFHQLEQVAILPEELEALRLADLEGLSQQQAADQMGISRQTFGNTVKSARFKVAKSLVEGHALVFPNEESNL.

The protein belongs to the UPF0251 family.

The polypeptide is UPF0251 protein VPA0321 (Vibrio parahaemolyticus serotype O3:K6 (strain RIMD 2210633)).